The primary structure comprises 276 residues: Undecaprenyl-diphosphatase 1 (276 aa).

Transmembrane regions (helical) follow at residues 83–103, 108–128, 187–207, 217–237, and 252–272; these read FTLN…LFEK, VLFS…IILW, VATE…TLYE, VDSL…AFVC, and VFAW…YSGW.

It belongs to the UppP family.

The protein localises to the cell inner membrane. It carries out the reaction di-trans,octa-cis-undecaprenyl diphosphate + H2O = di-trans,octa-cis-undecaprenyl phosphate + phosphate + H(+). Functionally, catalyzes the dephosphorylation of undecaprenyl diphosphate (UPP). Confers resistance to bacitracin. The chain is Undecaprenyl-diphosphatase 1 from Burkholderia cenocepacia (strain HI2424).